We begin with the raw amino-acid sequence, 96 residues long: Protein RnfH (96 aa).

The protein belongs to the UPF0125 (RnfH) family.

This is Protein RnfH from Escherichia coli O127:H6 (strain E2348/69 / EPEC).